A 318-amino-acid chain; its full sequence is dTDP-6-deoxy-L-talose 4-dehydrogenase (NAD(P)(+)) (318 aa).

Residues Phe19–Ile20, Asp60–Pro61, Asn95, Thr120, Tyr145, and Lys149 each bind NAD(+). Positions 120 and 145 each coordinate substrate. Tyr145 functions as the Proton acceptor in the catalytic mechanism.

Belongs to the NAD(P)-dependent epimerase/dehydratase family.

It catalyses the reaction dTDP-6-deoxy-beta-L-talose + NAD(+) = dTDP-4-dehydro-beta-L-rhamnose + NADH + H(+). The enzyme catalyses dTDP-6-deoxy-beta-L-talose + NADP(+) = dTDP-4-dehydro-beta-L-rhamnose + NADPH + H(+). Its function is as follows. Catalyzes the reduction of dTDP-6-deoxy-L-lyxo-4-hexulose to dTDP-6-deoxy-L-talose. Can use NAD(+) or NADP(+). This is dTDP-6-deoxy-L-talose 4-dehydrogenase (NAD(P)(+)) (tal) from Kitasatospora kifunensis (Streptomyces kifunensis).